Reading from the N-terminus, the 266-residue chain is Proteasome subunit alpha type-1 (266 aa).

A disordered region spans residues 235–266 (DGFKTRPEDIPAVADNEEDDDELHEQPPDVEE). A compositionally biased stretch (acidic residues) spans 249 to 266 (DNEEDDDELHEQPPDVEE).

Belongs to the peptidase T1A family. The 26S proteasome consists of a 20S proteasome core and two 19S regulatory subunits. The 20S proteasome core is composed of 28 subunits that are arranged in four stacked rings, resulting in a barrel-shaped structure. The two end rings are each formed by seven alpha subunits, and the two central rings are each formed by seven beta subunits. The catalytic chamber with the active sites is on the inside of the barrel.

It is found in the cytoplasm. It localises to the nucleus. In terms of biological role, the proteasome is a multicatalytic proteinase complex which is characterized by its ability to cleave peptides with Arg, Phe, Tyr, Leu, and Glu adjacent to the leaving group at neutral or slightly basic pH. The proteasome has an ATP-dependent proteolytic activity. This Trypanosoma brucei rhodesiense protein is Proteasome subunit alpha type-1.